Here is a 96-residue protein sequence, read N- to C-terminus: MNTFLLLLTISLLVVVQIQTGDLGQNSTAVTTPANKAATTAAATTKAAATTATKTTTAVRKTPGKPPKAGASSITDVGACTFLFFANTLMCLFYLS.

The N-terminal stretch at 1–23 is a signal peptide; it reads MNTFLLLLTISLLVVVQIQTGDL. N-linked (GlcNAc...) asparagine glycosylation is present at Asn-26. A lipid anchor (GPI-anchor amidated glycine) is attached at Gly-70. Residues 71 to 96 constitute a propeptide, removed in mature form; that stretch reads ASSITDVGACTFLFFANTLMCLFYLS.

The protein localises to the cell membrane. In terms of biological role, may play a role in carrying and orienting carbohydrate, as well as having a more specific role. This is CAMPATH-1 antigen (Cd52) from Rattus norvegicus (Rat).